We begin with the raw amino-acid sequence, 208 residues long: Mitochondrial import inner membrane translocase subunit Tim23 (208 aa).

Transmembrane regions (helical) follow at residues 73–93 (FELA…FGTL), 125–145 (ASWA…GVAI), and 173–193 (GLKG…LYAL).

The protein belongs to the Tim17/Tim22/Tim23 family. Component of the TIM23 complex at least composed of timm23, timm17 and timm50. The complex interacts with the timm44 component of the PAM complex.

Its subcellular location is the mitochondrion inner membrane. In terms of biological role, essential component of the TIM23 complex, a complex that mediates the translocation of transit peptide-containing proteins across the mitochondrial inner membrane. Plays an essential role in early embryonic development. This is Mitochondrial import inner membrane translocase subunit Tim23 (timm23) from Danio rerio (Zebrafish).